A 181-amino-acid chain; its full sequence is Ribulose bisphosphate carboxylase small subunit, chloroplastic 2 (181 aa).

The transit peptide at 1-54 (MASSMLSSAAVVTSPAQATMVAPFTGLKSSAAFPVTRKANNDITSIASNGGRVS) directs the protein to the chloroplast.

It belongs to the RuBisCO small chain family. In terms of assembly, heterohexadecamer of 8 large and 8 small subunits.

It localises to the plastid. It is found in the chloroplast. Its function is as follows. RuBisCO catalyzes two reactions: the carboxylation of D-ribulose 1,5-bisphosphate, the primary event in carbon dioxide fixation, as well as the oxidative fragmentation of the pentose substrate. Both reactions occur simultaneously and in competition at the same active site. Although the small subunit is not catalytic it is essential for maximal activity. The chain is Ribulose bisphosphate carboxylase small subunit, chloroplastic 2 from Brassica napus (Rape).